The primary structure comprises 284 residues: Protein pxr1 (284 aa).

One can recognise a G-patch domain in the interval 25 to 71 (TNRLGFKLLSSYGWVNGNGLGEKQHGRIHNIKVSLKDDTLGIGAKAT). The interval 149–253 (DEDRVCEDAS…KVKEGNRPAS (105 aa)) is disordered. Residues Ser-159 and Ser-160 each carry the phosphoserine modification. Composition is skewed to basic residues over residues 166 to 181 (EKRKKHSSKKKSKKKT) and 196 to 206 (TKKKKKEHKKK). 2 stretches are compositionally biased toward basic and acidic residues: residues 207–224 (DKESSSKKRKSGSSDKEE) and 233–249 (KDKPESTSSVEKVKEGN).

It belongs to the PINX1 family.

The protein localises to the nucleus. The protein resides in the nucleolus. In terms of biological role, involved in rRNA-processing at A0, A1 and A2 sites and negatively regulates telomerase. The protein is Protein pxr1 (pxr1) of Schizosaccharomyces pombe (strain 972 / ATCC 24843) (Fission yeast).